The sequence spans 303 residues: Pseudouridine-5'-phosphate glycosidase (303 aa).

Residue glutamate 25 is the Proton donor of the active site. Positions 87 and 107 each coordinate substrate. Aspartate 139 contributes to the Mn(2+) binding site. A substrate-binding site is contributed by 141–143 (SAD). The Nucleophile role is filled by lysine 160.

This sequence belongs to the pseudouridine-5'-phosphate glycosidase family. Homotrimer. It depends on Mn(2+) as a cofactor.

It carries out the reaction D-ribose 5-phosphate + uracil = psi-UMP + H2O. Functionally, catalyzes the reversible cleavage of pseudouridine 5'-phosphate (PsiMP) to ribose 5-phosphate and uracil. Functions biologically in the cleavage direction, as part of a pseudouridine degradation pathway. The chain is Pseudouridine-5'-phosphate glycosidase from Hahella chejuensis (strain KCTC 2396).